We begin with the raw amino-acid sequence, 207 residues long: MADLSTLARPYAKAAFDYANENGAVNEWEDFLFVAATVVNDKSFSTWLDNPAVSAEHKSAALVDLYDTQVASANDSAFKQLLDANKGVRPDSNASYSKVSVAFSNFVKQLSEQERLALLPEVYEHYRRHKAVSLKQLDAYVTSAYPLTDDQRDMLQARLAASLNASVVIHESVDASLLAGVTIKVGDKVIDDSMRGKLQQLKTQLTA.

Belongs to the ATPase delta chain family. As to quaternary structure, F-type ATPases have 2 components, F(1) - the catalytic core - and F(0) - the membrane proton channel. F(1) has five subunits: alpha(3), beta(3), gamma(1), delta(1), epsilon(1). F(0) has three main subunits: a(1), b(2) and c(10-14). The alpha and beta chains form an alternating ring which encloses part of the gamma chain. F(1) is attached to F(0) by a central stalk formed by the gamma and epsilon chains, while a peripheral stalk is formed by the delta and b chains.

It is found in the cell inner membrane. Functionally, f(1)F(0) ATP synthase produces ATP from ADP in the presence of a proton or sodium gradient. F-type ATPases consist of two structural domains, F(1) containing the extramembraneous catalytic core and F(0) containing the membrane proton channel, linked together by a central stalk and a peripheral stalk. During catalysis, ATP synthesis in the catalytic domain of F(1) is coupled via a rotary mechanism of the central stalk subunits to proton translocation. In terms of biological role, this protein is part of the stalk that links CF(0) to CF(1). It either transmits conformational changes from CF(0) to CF(1) or is implicated in proton conduction. The chain is ATP synthase subunit delta from Psychrobacter cryohalolentis (strain ATCC BAA-1226 / DSM 17306 / VKM B-2378 / K5).